The sequence spans 460 residues: Lipase member H (460 aa).

Residues Met-1–Thr-24 form the signal peptide. Residues Asn-67 and Asn-75 are each glycosylated (N-linked (GlcNAc...) asparagine). Ser-163 (nucleophile) is an active-site residue. N-linked (GlcNAc...) asparagine glycosylation occurs at Asn-177. Catalysis depends on Asp-187, which acts as the Charge relay system. Cys-242 and Cys-255 form a disulfide bridge. His-257 functions as the Charge relay system in the catalytic mechanism. Disulfide bonds link Cys-279-Cys-290 and Cys-293-Cys-301. Residue Asn-289 is glycosylated (N-linked (GlcNAc...) asparagine). Asn-366 carries N-linked (GlcNAc...) asparagine glycosylation. An intrachain disulfide couples Cys-436 to Cys-455.

This sequence belongs to the AB hydrolase superfamily. Lipase family.

It localises to the secreted. The protein localises to the cell membrane. The catalysed reaction is 1-hexadecanoyl-2-(9Z-octadecenoyl)-sn-glycero-3-phosphate + H2O = 2-(9Z-octadecenoyl)-sn-glycero-3-phosphate + hexadecanoate + H(+). Its function is as follows. Hydrolyzes specifically phosphatidic acid (PA) to produce 2-acyl lysophosphatidic acid (LPA; a potent bioactive lipid mediator) and fatty acid. Does not hydrolyze other phospholipids, like phosphatidylserine (PS), phosphatidylcholine (PC) and phosphatidylethanolamine (PE) or triacylglycerol (TG). The chain is Lipase member H (liph) from Xenopus tropicalis (Western clawed frog).